The chain runs to 534 residues: Cyclin-L1 (534 aa).

Cyclin-like stretches follow at residues 94 to 196 (ELIQ…RVLK) and 209 to 293 (KIIV…KILQ). The disordered stretch occupies residues 327–534 (LPEGAPVLDN…DHPGHSRHRR (208 aa)). Basic and acidic residues predominate over residues 389–399 (KGRESRSRSGS). Low complexity-rich tracts occupy residues 400-412 (RDQS…SRSA) and 437-453 (RSGS…TYKS). The tract at residues 400–436 (RDQSYSRSPSRSASPKHRKSESYSTSSGSKSHSRSRS) is RS. A compositionally biased stretch (basic residues) spans 468–485 (SAHKARKSRSRSSSRSRS). Over residues 486–495 (RSRERSDHSG) the composition is skewed to basic and acidic residues. A compositionally biased stretch (basic residues) spans 496-511 (KYKKKSHYYRNHRHER). A compositionally biased stretch (basic and acidic residues) spans 512 to 528 (SRSYERASHRYDRDHPG).

Belongs to the cyclin family. Cyclin L subfamily.

It is found in the nucleus speckle. The protein localises to the nucleus. Its subcellular location is the nucleoplasm. Functionally, involved in pre-mRNA splicing. This chain is Cyclin-L1 (CCNL1), found in Gallus gallus (Chicken).